Consider the following 144-residue polypeptide: Superoxide dismutase [Mn], mitochondrial (144 aa).

H10, H58, and D143 together coordinate Mn(2+).

It belongs to the iron/manganese superoxide dismutase family. In terms of assembly, homotetramer. It depends on Mn(2+) as a cofactor.

It localises to the mitochondrion matrix. It catalyses the reaction 2 superoxide + 2 H(+) = H2O2 + O2. Functionally, destroys superoxide anion radicals which are normally produced within the cells and which are toxic to biological systems. This Apostichopus californicus (California sea cucumber) protein is Superoxide dismutase [Mn], mitochondrial.